Reading from the N-terminus, the 413-residue chain is cAMP-dependent protein kinase regulatory subunit (413 aa).

Residues Met1–Lys145 form a disordered region. Residues Ser24–Phe161 form a dimerization and phosphorylation region. The segment covering Gly58–Ser67 has biased composition (low complexity). Residues Thr121–Trp138 are compositionally biased toward polar residues. At Ser122 the chain carries Phosphoserine. 3',5'-cyclic AMP contacts are provided by residues Leu162 to Glu291, Glu240, Arg249, Leu294 to Ser413, Glu361, and Arg370.

Belongs to the cAMP-dependent kinase regulatory chain family. As to quaternary structure, tetramer, composed of 2 regulatory (R) and 2 catalytic (C) subunits. In the presence of cAMP it dissociates into 2 active monomeric C subunits and an R dimer.

In Aspergillus fumigatus (strain ATCC MYA-4609 / CBS 101355 / FGSC A1100 / Af293) (Neosartorya fumigata), this protein is cAMP-dependent protein kinase regulatory subunit (pkaR).